A 209-amino-acid polypeptide reads, in one-letter code: Uracil phosphoribosyltransferase (209 aa).

5-phospho-alpha-D-ribose 1-diphosphate is bound by residues R79, R104, and D131–S139. Residues I194 and G199–A201 contribute to the uracil site. 5-phospho-alpha-D-ribose 1-diphosphate is bound at residue D200.

Belongs to the UPRTase family. Mg(2+) serves as cofactor.

It catalyses the reaction UMP + diphosphate = 5-phospho-alpha-D-ribose 1-diphosphate + uracil. Its pathway is pyrimidine metabolism; UMP biosynthesis via salvage pathway; UMP from uracil: step 1/1. With respect to regulation, allosterically activated by GTP. Catalyzes the conversion of uracil and 5-phospho-alpha-D-ribose 1-diphosphate (PRPP) to UMP and diphosphate. The polypeptide is Uracil phosphoribosyltransferase (Listeria monocytogenes serovar 1/2a (strain ATCC BAA-679 / EGD-e)).